Consider the following 67-residue polypeptide: Sec-independent protein translocase protein TatA (67 aa).

The chain crosses the membrane as a helical span at residues 1 to 21; that stretch reads MMPGPFELIVILVIVLLLFGG.

It belongs to the TatA/E family. In terms of assembly, the Tat system comprises two distinct complexes: a TatABC complex, containing multiple copies of TatA, TatB and TatC subunits, and a separate TatA complex, containing only TatA subunits. Substrates initially bind to the TatABC complex, which probably triggers association of the separate TatA complex to form the active translocon.

It is found in the cell inner membrane. Its function is as follows. Part of the twin-arginine translocation (Tat) system that transports large folded proteins containing a characteristic twin-arginine motif in their signal peptide across membranes. TatA could form the protein-conducting channel of the Tat system. In Ruthia magnifica subsp. Calyptogena magnifica, this protein is Sec-independent protein translocase protein TatA.